The chain runs to 243 residues: Small ribosomal subunit protein uS3 (243 aa).

At Ala-2 the chain carries N-acetylalanine. Ser-6 is subject to Phosphoserine; by PKC/PRKCD. One can recognise a KH type-2 domain in the interval 21–92 (LNEFLTRELA…SVELYAEKVA (72 aa)). The residue at position 35 (Ser-35) is a Phosphoserine. Phosphothreonine; by MAPK is present on Thr-42. Lys-62 is modified (N6-acetyllysine). Asymmetric dimethylarginine; by PRMT1 is present on residues Arg-64, Arg-65, and Arg-67. Phosphothreonine; by PKB is present on Thr-70. Lys-90 participates in a covalent cross-link: Glycyl lysine isopeptide (Lys-Gly) (interchain with G-Cter in ubiquitin). At Ser-104 the chain carries Phosphoserine. Lys-132 is subject to N6-succinyllysine. Lys-202 is covalently cross-linked (Glycyl lysine isopeptide (Lys-Gly) (interchain with G-Cter in ubiquitin)). Ser-209 carries the phosphoserine; by IKKB modification. Residue Lys-214 forms a Glycyl lysine isopeptide (Lys-Gly) (interchain with G-Cter in SUMO2); alternate linkage. Lys-214 participates in a covalent cross-link: Glycyl lysine isopeptide (Lys-Gly) (interchain with G-Cter in ubiquitin); alternate. The segment at 214 to 243 (KDEILPTTPISEQKGGKPEPPAMPQPVPTA) is disordered. Thr-220 carries the post-translational modification Phosphothreonine. The residue at position 221 (Thr-221) is a Phosphothreonine; by CDK1 and PKC/PRKCD. Ser-224 carries the post-translational modification Phosphoserine. Residue Lys-230 forms a Glycyl lysine isopeptide (Lys-Gly) (interchain with G-Cter in SUMO2) linkage. Pro residues predominate over residues 231–243 (PEPPAMPQPVPTA). Thr-242 is subject to Phosphothreonine.

Belongs to the universal ribosomal protein uS3 family. Component of the 40S small ribosomal subunit. Identified in a IGF2BP1-dependent mRNP granule complex containing untranslated mRNAs. Interacts with HNRPD. Interacts with PRMT1; the interaction methylates RPS3. Interacts with SUMO1; the interaction sumoylates RPS3. Interacts with UBC9. Interacts with CDK1; the interaction phosphorylates RPS3. Interacts with PRKCD; the interaction phosphorylates RPS3. Interacts with PKB/AKT; the interaction phosphorylates RPS3. Interacts with E2F1; the interaction occurs in the absence of nerve growth factor and increases transcription of pro-apoptotic proteins BCL2L11/BIM and HRK/Dp5. Interacts with the base excision repair proteins APEX1 and OGG1; interaction with OGG1 increases OGG1 N-glycosylase activity. Interacts with UNG; the interaction increases the uracil excision activity of UNG1. Interacts with HSP90; the interaction prevents the ubiquitination and proteasome-dependent degradation of RPS3 and is suppressed by increased ROS levels. Interacts with TOM70; the interaction promotes translocation of RPS3 to the mitochondrion. Interacts (via N-terminus) with RELA (via N-terminus); the interaction enhances the DNA-binding activity of the NF-kappa-B p65-p50 complex. Interacts with NFKBIA; the interaction is direct and may bridge the interaction between RPS3 and RELA. Interacts with IKKB; the interaction phosphorylates RPS3 and enhances its translocation to the nucleus. Interacts (via KH domain) with MDM2 and TP53. Interacts with TRADD. Interacts with CRY1. Post-translationally, methylation by PRMT1 is required for import into the nucleolus and for ribosome assembly. In terms of processing, sumoylation by SUMO1 enhances protein stability through increased resistance to proteolysis. Sumoylation occurs at one or more of the three consensus sites, Lys-18, Lys-214 and Lys-230. Phosphorylation at Thr-221 by CDK1 occurs mainly in G2/M phase. Phosphorylation by PRKCD occurs on a non-ribosomal-associated form which results in translocation of RPS3 to the nucleus and enhances its endonuclease activity. Phosphorylated on Ser-209 by IKKB in response to activation of the NF-kappa-B p65-p50 complex which enhances the association of RPS3 with importin-alpha and mediates the nuclear translocation of RPS3. Phosphorylation by MAPK is required for translocation to the nucleus following exposure of cells to DNA damaging agents such as hydrogen peroxide. Phosphorylation by PKB/AKT mediates RPS3 nuclear translocation, enhances RPS3 endonuclease activity and suppresses RPS3-induced neuronal apoptosis. Post-translationally, ubiquitinated; ubiquitination is prevented by interaction with HSP90 which stabilizes the protein. Monoubiquitinated at Lys-214 by RNF10 and ZNF598 when a ribosome has stalled during translation of poly(A) sequences, leading to preclude synthesis of a long poly-lysine tail and initiate the ribosome quality control (RQC) pathway to degrade the potentially detrimental aberrant nascent polypeptide. Deubiquitinated at Lys-214 by USP10, preventing degradation by the proteasome and promoting 40S ribosome subunit recycling following ribosome dissociation. In terms of processing, ufmylated by UFL1.

Its subcellular location is the cytoplasm. It localises to the nucleus. The protein localises to the nucleolus. The protein resides in the mitochondrion inner membrane. It is found in the cytoskeleton. Its subcellular location is the spindle. It carries out the reaction 2'-deoxyribonucleotide-(2'-deoxyribose 5'-phosphate)-2'-deoxyribonucleotide-DNA = a 3'-end 2'-deoxyribonucleotide-(2,3-dehydro-2,3-deoxyribose 5'-phosphate)-DNA + a 5'-end 5'-phospho-2'-deoxyribonucleoside-DNA + H(+). Component of the small ribosomal subunit. The ribosome is a large ribonucleoprotein complex responsible for the synthesis of proteins in the cell. Has endonuclease activity and plays a role in repair of damaged DNA. Cleaves phosphodiester bonds of DNAs containing altered bases with broad specificity and cleaves supercoiled DNA more efficiently than relaxed DNA. Displays high binding affinity for 7,8-dihydro-8-oxoguanine (8-oxoG), a common DNA lesion caused by reactive oxygen species (ROS). Has also been shown to bind with similar affinity to intact and damaged DNA. Stimulates the N-glycosylase activity of the base excision protein OGG1. Enhances the uracil excision activity of UNG1. Also stimulates the cleavage of the phosphodiester backbone by APEX1. When located in the mitochondrion, reduces cellular ROS levels and mitochondrial DNA damage. Has also been shown to negatively regulate DNA repair in cells exposed to hydrogen peroxide. Plays a role in regulating transcription as part of the NF-kappa-B p65-p50 complex where it binds to the RELA/p65 subunit, enhances binding of the complex to DNA and promotes transcription of target genes. Represses its own translation by binding to its cognate mRNA. Binds to and protects TP53/p53 from MDM2-mediated ubiquitination. Involved in spindle formation and chromosome movement during mitosis by regulating microtubule polymerization. Involved in induction of apoptosis through its role in activation of CASP8. Induces neuronal apoptosis by interacting with the E2F1 transcription factor and acting synergistically with it to up-regulate pro-apoptotic proteins BCL2L11/BIM and HRK/Dp5. Interacts with TRADD following exposure to UV radiation and induces apoptosis by caspase-dependent JNK activation. The chain is Small ribosomal subunit protein uS3 (RPS3) from Bos taurus (Bovine).